Here is an 848-residue protein sequence, read N- to C-terminus: Dynein axonemal intermediate chain 4 (848 aa).

Disordered regions lie at residues 345-370 (SKANVLPKDQDQRLPGSTTEKNSETS) and 431-464 (EPEPEEPEDVLESAKHEEVEEESKKEEEEEIHAE). Polar residues predominate over residues 359–370 (PGSTTEKNSETS). The span at 442 to 456 (ESAKHEEVEEESKKE) shows a compositional bias: basic and acidic residues. WD repeat units lie at residues 534–574 (QSPY…NVPV), 583–631 (KHLG…DCYD), 658–698 (SRQA…QYLD), 702–742 (GHKG…PSLS), 745–784 (PATSVVYDVAWSPKSSYIFAAANENRVEIWDLHISTLDPL), and 790–829 (NPGIKFTTILFAKQTDCLLVGDSDGQVSVYELRNMPTVLE).

Part of the multisubunit axonemal dynein complex formed at least of two heavy chains and a number of intermediate and light chains. Associated with axonemal dynein subunits such as, DNAH2, DNAI3, and DYNLT1. Interacts with DYNLT1.

The protein resides in the cytoplasm. It is found in the cytoskeleton. It localises to the flagellum axoneme. The protein localises to the cilium axoneme. Its subcellular location is the dynein axonemal particle. Functionally, plays a critical role in the assembly of axonemal dynein complex, thereby playing a role in ciliary motility. The protein is Dynein axonemal intermediate chain 4 of Homo sapiens (Human).